The sequence spans 521 residues: Probable protein kinase UbiB (521 aa).

The 379-residue stretch at 119 to 497 (SFDRQPVASA…QKRTNRLLQS (379 aa)) folds into the Protein kinase domain. Residues 125-133 (VASASIAQV) and Lys151 contribute to the ATP site. Residue Asp286 is the Proton acceptor of the active site. The chain crosses the membrane as a helical span at residues 496 to 516 (QSLIYGGLGFVLGLLVMQLFV).

The protein belongs to the ABC1 family. UbiB subfamily.

It localises to the cell inner membrane. The protein operates within cofactor biosynthesis; ubiquinone biosynthesis [regulation]. Is probably a protein kinase regulator of UbiI activity which is involved in aerobic coenzyme Q (ubiquinone) biosynthesis. The protein is Probable protein kinase UbiB of Acidovorax sp. (strain JS42).